Consider the following 573-residue polypeptide: Arylsulfatase I (573 aa).

Residues 1–23 (MHALSGFSLVSLLSLGYLSWDWA) form the signal peptide. Ca(2+)-binding residues include D55, D56, and C93. C93 serves as the catalytic Nucleophile. At C93 the chain carries 3-oxoalanine (Cys). K147 provides a ligand contact to substrate. The active site involves H149. H239 is a substrate binding site. N-linked (GlcNAc...) asparagine glycosylation is found at N276 and N288. D297 and N298 together coordinate Ca(2+). Residue K315 participates in substrate binding. 2 N-linked (GlcNAc...) asparagine glycosylation sites follow: N466 and N496. The tract at residues 506-550 (AANPRAHPDFNGGAWGPWASDEDEEEEDEEEEGRARSFPRGRRKK) is disordered. Acidic residues predominate over residues 525–537 (SDEDEEEEDEEEE).

The protein belongs to the sulfatase family. The cofactor is Ca(2+). The oxidation of Cys-93 residue to 3-oxoalanine (also known as C(alpha)-formylglycine) by SUMF1/Sulfatase-modifying factor 1, seems critical for catalytic activity.

The protein resides in the secreted. It is found in the endoplasmic reticulum. Functionally, displays arylsulfatase activity at neutral pH, when co-expressed with SUMF1; arylsulfatase activity is measured in the secretion medium of retinal cell line, but no activity is recorded when measured in cell extracts. The protein is Arylsulfatase I (Arsi) of Rattus norvegicus (Rat).